Here is a 368-residue protein sequence, read N- to C-terminus: Phenylalanine--tRNA ligase alpha subunit (368 aa).

Glu268 contributes to the Mg(2+) binding site.

The protein belongs to the class-II aminoacyl-tRNA synthetase family. Phe-tRNA synthetase alpha subunit type 1 subfamily. Tetramer of two alpha and two beta subunits. Mg(2+) serves as cofactor.

The protein localises to the cytoplasm. It carries out the reaction tRNA(Phe) + L-phenylalanine + ATP = L-phenylalanyl-tRNA(Phe) + AMP + diphosphate + H(+). The polypeptide is Phenylalanine--tRNA ligase alpha subunit (Nitrobacter hamburgensis (strain DSM 10229 / NCIMB 13809 / X14)).